The sequence spans 500 residues: Probable serine carboxypeptidase CPVL (500 aa).

The N-terminal stretch at methionine 1–serine 23 is a signal peptide. 2 N-linked (GlcNAc...) asparagine glycosylation sites follow: asparagine 110 and asparagine 161. Serine 233 is a catalytic residue. N-linked (GlcNAc...) asparagine glycans are attached at residues asparagine 333 and asparagine 360. Residues aspartate 414 and histidine 474 contribute to the active site.

The protein belongs to the peptidase S10 family.

The protein localises to the secreted. Its function is as follows. May be involved in the digestion of phagocytosed particles in the lysosome, participation in an inflammatory protease cascade, and trimming of peptides for antigen presentation. This Dictyostelium discoideum (Social amoeba) protein is Probable serine carboxypeptidase CPVL (cpvl).